The primary structure comprises 198 residues: MAEKQTAKRNRREEILQSLALMLESSDGSQRITTAKLAASVGVSEAALYRHFPSKTRMFDSLIEFIEDSLITRINLILKDEKDTTARLRLIVLLLLGFGERNPGLTRILTGHALMFEQDRLQGRINQLFERIEAQLRQVLREKRMREGEGYTTDETLLASQILAFCEGMLSRFVRSEFKYRPTDDFDARWPLIAAQLQ.

An HTH tetR-type domain is found at 10–70; that stretch reads NRREEILQSL…SLIEFIEDSL (61 aa). A DNA-binding region (H-T-H motif) is located at residues 33-52; sequence TTAKLAASVGVSEAALYRHF. Residues 117 to 144 are a coiled coil; sequence EQDRLQGRINQLFERIEAQLRQVLREKR.

Belongs to the nucleoid occlusion factor SlmA family. In terms of assembly, homodimer. Interacts with FtsZ.

Its subcellular location is the cytoplasm. The protein localises to the nucleoid. Its function is as follows. Required for nucleoid occlusion (NO) phenomenon, which prevents Z-ring formation and cell division over the nucleoid. Acts as a DNA-associated cell division inhibitor that binds simultaneously chromosomal DNA and FtsZ, and disrupts the assembly of FtsZ polymers. SlmA-DNA-binding sequences (SBS) are dispersed on non-Ter regions of the chromosome, preventing FtsZ polymerization at these regions. The sequence is that of Nucleoid occlusion factor SlmA from Escherichia coli (strain 55989 / EAEC).